The following is a 428-amino-acid chain: Flotillin-2a (428 aa).

S-palmitoyl cysteine attachment occurs at residues Cys-4, Cys-19, and Cys-20.

It belongs to the band 7/mec-2 family. Flotillin subfamily. As to quaternary structure, heterooligomer; Heterooligomerizes with ic complex of flotillins 1 and 2. Palmitoylation may be required for the formation of higher order complexes and for neurite outgrowth in cultured neural stem cells.

It is found in the membrane. It localises to the endosome. Functionally, may play a role in axon growth and regeneration. May be involved in epidermal cell adhesion and epidermal structure and function. In Danio rerio (Zebrafish), this protein is Flotillin-2a (flot2a).